Consider the following 130-residue polypeptide: Small ribosomal subunit protein uS9 (130 aa).

Residues 105 to 130 (TRDSRMVERKKPGLKKARRASQFSKR) are disordered. The span at 106 to 115 (RDSRMVERKK) shows a compositional bias: basic and acidic residues. The segment covering 116-130 (PGLKKARRASQFSKR) has biased composition (basic residues).

This sequence belongs to the universal ribosomal protein uS9 family.

The chain is Small ribosomal subunit protein uS9 from Oenococcus oeni (strain ATCC BAA-331 / PSU-1).